The chain runs to 1444 residues: RNA-directed RNA polymerase P1 (1444 aa).

The tract at residues 156–182 (SEEIQMDESQSDKRRRKKRMEKSRPVW) is disordered. Residues 690 to 897 (LGVGFATLYQ…KTVISHISGE (208 aa)) enclose the RdRp catalytic domain.

It belongs to the reoviridae RNA-directed RNA polymerase family.

It is found in the virion. Its subcellular location is the host cytoplasm. The catalysed reaction is RNA(n) + a ribonucleoside 5'-triphosphate = RNA(n+1) + diphosphate. RNA-directed RNA polymerase that is involved in both transcription and genome replication. Together with the capping enzyme P5 and protein P7, forms an enzyme complex positioned near the channels situated at each of the five-fold vertices of the core. This is RNA-directed RNA polymerase P1 (S1) from Rice dwarf virus (isolate Fujian) (RDV).